A 327-amino-acid chain; its full sequence is Phenylalanine--tRNA ligase alpha subunit (327 aa).

Glu252 is a binding site for Mg(2+).

Belongs to the class-II aminoacyl-tRNA synthetase family. Phe-tRNA synthetase alpha subunit type 1 subfamily. Tetramer of two alpha and two beta subunits. It depends on Mg(2+) as a cofactor.

The protein localises to the cytoplasm. It carries out the reaction tRNA(Phe) + L-phenylalanine + ATP = L-phenylalanyl-tRNA(Phe) + AMP + diphosphate + H(+). This is Phenylalanine--tRNA ligase alpha subunit from Aliivibrio fischeri (strain ATCC 700601 / ES114) (Vibrio fischeri).